The sequence spans 124 residues: Large ribosomal subunit protein uL29 (124 aa).

This sequence belongs to the universal ribosomal protein uL29 family.

The protein is Large ribosomal subunit protein uL29 (RPL35) of Tetrahymena thermophila (strain SB210).